The primary structure comprises 77 residues: Translation initiation factor IF-1, chloroplastic (77 aa).

An S1-like domain is found at 1 to 71 (MKEQKWTHEG…TRGRIIYRLR (71 aa)).

This sequence belongs to the IF-1 family. In terms of assembly, component of the 30S ribosomal translation pre-initiation complex which assembles on the 30S ribosome in the order IF-2 and IF-3, IF-1 and N-formylmethionyl-tRNA(fMet); mRNA recruitment can occur at any time during PIC assembly.

It localises to the plastid. The protein localises to the chloroplast. Functionally, one of the essential components for the initiation of protein synthesis. Stabilizes the binding of IF-2 and IF-3 on the 30S subunit to which N-formylmethionyl-tRNA(fMet) subsequently binds. Helps modulate mRNA selection, yielding the 30S pre-initiation complex (PIC). Upon addition of the 50S ribosomal subunit IF-1, IF-2 and IF-3 are released leaving the mature 70S translation initiation complex. This Coffea arabica (Arabian coffee) protein is Translation initiation factor IF-1, chloroplastic.